The following is a 562-amino-acid chain: SLAIN motif-containing protein-like (562 aa).

Disordered regions lie at residues 292 to 313, 344 to 381, and 409 to 562; these read QDYA…LHSL, HRYS…IQNH, and SLEA…DGCY. Low complexity-rich tracts occupy residues 295 to 311 and 345 to 355; these read ASSS…ASLH and RYSPSPLSSPR. 4 stretches are compositionally biased toward polar residues: residues 356–370, 424–442, 465–531, and 539–553; these read CQSP…TTSR, QGPS…STPP, VSTS…STVP, and SRRS…STLG.

It belongs to the SLAIN motif-containing family.

The sequence is that of SLAIN motif-containing protein-like from Xenopus laevis (African clawed frog).